We begin with the raw amino-acid sequence, 90 residues long: Signal recognition particle 19 kDa protein (90 aa).

It belongs to the SRP19 family. Part of the signal recognition particle protein translocation system, which is composed of SRP and FtsY. Archaeal SRP consists of a 7S RNA molecule of 300 nucleotides and two protein subunits: SRP54 and SRP19.

The protein resides in the cytoplasm. Functionally, involved in targeting and insertion of nascent membrane proteins into the cytoplasmic membrane. Binds directly to 7S RNA and mediates binding of the 54 kDa subunit of the SRP. This chain is Signal recognition particle 19 kDa protein, found in Methanococcus aeolicus (strain ATCC BAA-1280 / DSM 17508 / OCM 812 / Nankai-3).